A 298-amino-acid polypeptide reads, in one-letter code: Small ribosomal subunit protein uS2 (298 aa).

2 stretches are compositionally biased toward basic and acidic residues: residues 237 to 259 (QSKE…DGQK) and 280 to 298 (PKSE…ENKG). Residues 237-298 (QSKELDDKAD…DAAKLPENKG (62 aa)) form a disordered region.

The protein belongs to the universal ribosomal protein uS2 family.

This Neorickettsia sennetsu (strain ATCC VR-367 / Miyayama) (Ehrlichia sennetsu) protein is Small ribosomal subunit protein uS2.